The primary structure comprises 261 residues: Rhomboid-type serine protease 2 (261 aa).

5 helical membrane passes run 17-37 (LTAG…VFPI), 58-78 (LYPL…SLFV), 94-114 (ITLN…GMLL), 116-136 (PNVY…YFAV), and 155-175 (LYIP…SSFV). The active-site Nucleophile is the S124. H177 is a catalytic residue.

This sequence belongs to the peptidase S54 family.

The protein localises to the golgi apparatus membrane. It localises to the golgi apparatus. Its subcellular location is the cis-Golgi network membrane. It catalyses the reaction Cleaves type-1 transmembrane domains using a catalytic dyad composed of serine and histidine that are contributed by different transmembrane domains.. Functionally, probable rhomboid-type serine protease that catalyzes intramembrane proteolysis. In Eremothecium gossypii (strain ATCC 10895 / CBS 109.51 / FGSC 9923 / NRRL Y-1056) (Yeast), this protein is Rhomboid-type serine protease 2 (RBD2).